Here is a 391-residue protein sequence, read N- to C-terminus: Small ribosomal subunit protein mS29 (391 aa).

The N-terminal 17 residues, 1–17, are a transit peptide targeting the mitochondrion; the sequence is MLTGITRLFSRVQKLDP. The disordered stretch occupies residues 30–59; the sequence is NSQVPAERPRTVSRTSDSDPAKHGEQHEGQ. Residues 45-59 are compositionally biased toward basic and acidic residues; that stretch reads SDSDPAKHGEQHEGQ. N6-acetyllysine is present on residues lysine 168 and lysine 200.

This sequence belongs to the mitochondrion-specific ribosomal protein mS29 family. As to quaternary structure, component of the mitochondrial ribosome small subunit (28S) which comprises a 12S rRNA and about 30 distinct proteins. Interacts with DELE1. Interacts with NOA1.

It is found in the mitochondrion. It carries out the reaction GTP + H2O = GDP + phosphate + H(+). As a component of the mitochondrial small ribosomal subunit, it plays a role in the translation of mitochondrial mRNAs. Involved in mediating interferon-gamma-induced cell death. Displays GTPase activity in vitro. This chain is Small ribosomal subunit protein mS29, found in Mus musculus (Mouse).